The chain runs to 270 residues: Putative pyruvate, phosphate dikinase regulatory protein (270 aa).

151-158 (GVSRTSKT) serves as a coordination point for ADP.

It belongs to the pyruvate, phosphate/water dikinase regulatory protein family. PDRP subfamily.

The catalysed reaction is N(tele)-phospho-L-histidyl/L-threonyl-[pyruvate, phosphate dikinase] + ADP = N(tele)-phospho-L-histidyl/O-phospho-L-threonyl-[pyruvate, phosphate dikinase] + AMP + H(+). It catalyses the reaction N(tele)-phospho-L-histidyl/O-phospho-L-threonyl-[pyruvate, phosphate dikinase] + phosphate + H(+) = N(tele)-phospho-L-histidyl/L-threonyl-[pyruvate, phosphate dikinase] + diphosphate. Its function is as follows. Bifunctional serine/threonine kinase and phosphorylase involved in the regulation of the pyruvate, phosphate dikinase (PPDK) by catalyzing its phosphorylation/dephosphorylation. This Bacillus velezensis (strain DSM 23117 / BGSC 10A6 / LMG 26770 / FZB42) (Bacillus amyloliquefaciens subsp. plantarum) protein is Putative pyruvate, phosphate dikinase regulatory protein.